We begin with the raw amino-acid sequence, 213 residues long: N-(5'-phosphoribosyl)anthranilate isomerase (213 aa).

Belongs to the TrpF family.

The catalysed reaction is N-(5-phospho-beta-D-ribosyl)anthranilate = 1-(2-carboxyphenylamino)-1-deoxy-D-ribulose 5-phosphate. It participates in amino-acid biosynthesis; L-tryptophan biosynthesis; L-tryptophan from chorismate: step 3/5. In Roseiflexus sp. (strain RS-1), this protein is N-(5'-phosphoribosyl)anthranilate isomerase.